The primary structure comprises 353 residues: uncharacterized protein (353 aa).

Positions 233–245 (ASCSNNEPSASLE) are enriched in polar residues. The interval 233-265 (ASCSNNEPSASLESESRHFSPVNSLSPSSLSTD) is disordered. A compositionally biased stretch (low complexity) spans 252-263 (SPVNSLSPSSLS).

This is an uncharacterized protein from Saccharomyces cerevisiae (strain ATCC 204508 / S288c) (Baker's yeast).